The chain runs to 175 residues: Dof zinc finger protein DOF1.5 (175 aa).

Residues 29 to 57 are disordered; that stretch reads EEQQQQQQPELQATTAVRSPSSDLTAEKR. A compositionally biased stretch (polar residues) spans 37 to 52; that stretch reads PELQATTAVRSPSSDL. The Dof-type zinc finger occupies 62 to 116; that stretch reads IPCPRCKSMETKFCYFNNYNVNQPRHFCKGCQRYWTAGGALRNVPVGAGRRKSKP. 4 residues coordinate Zn(2+): Cys64, Cys67, Cys89, and Cys92. The short motif at 162–168 is the Nuclear localization signal element; that stretch reads PVKRLRC.

It localises to the nucleus. Transcription factor that binds specifically to a 5'-AA[AG]G-3' consensus core sequence. Acts as a negative regulator in the phytochrome-mediated light responses. Controls phyB-mediated end-of-day response and the phyA-mediated anthocyanin accumulation. Not involved in direct flowering time regulation. The protein is Dof zinc finger protein DOF1.5 (DOF1.5) of Arabidopsis thaliana (Mouse-ear cress).